The primary structure comprises 216 residues: uncharacterized protein (216 aa).

2 consecutive 4Fe-4S ferredoxin-type domains span residues 160–189 and 188–216; these read DDKP…IDEK and EKPK…ALLP. Residues C169, C172, C175, C179, C197, C200, C203, and C207 each contribute to the [4Fe-4S] cluster site.

This sequence belongs to the FrhG family.

This is an uncharacterized protein from Methanocaldococcus jannaschii (strain ATCC 43067 / DSM 2661 / JAL-1 / JCM 10045 / NBRC 100440) (Methanococcus jannaschii).